Here is a 404-residue protein sequence, read N- to C-terminus: MKLPIYLDYAATTPVDPRVAEKMFQCMTMDGIFGNPASRSHRYGWQAEEAVDIARNQIAELINADHREIVFTSGATESNNLAIKGVAHFYHKKGKHIITSKTEHKAVLDTCRQLEREGFEVTYLEPAANGIIPMERLEAAMRDDTILVSIMHVNNEIGVIHDIDAIGELCRSKGIIFHMDAAQSAGKVPIDVQATQVDLLSISGHKMYGPKGIGALYVRRKPRIRLEAQMHGGGHERGMRSGTLPTHQIVGLGEAAAIAKAEMASDDARIGALRDKLWNGIKHIEETYINGDAIERVSGSLNVSFNYVEGESLMMALKDLAVSSGSACTSASLEPSYVLRALGLNDEMAHSSIRFSIGRFTTEEEIDHAIEVITQSIDKLREMSPLWEMFKDGIDLNQVQWAHH.

Residues 75-76 (AT), Asn155, Gln183, and 203-205 (SGH) contribute to the pyridoxal 5'-phosphate site. Position 206 is an N6-(pyridoxal phosphate)lysine (Lys206). Position 243 (Thr243) interacts with pyridoxal 5'-phosphate. Residue Cys328 is the Cysteine persulfide intermediate of the active site. Cys328 serves as a coordination point for [2Fe-2S] cluster.

It belongs to the class-V pyridoxal-phosphate-dependent aminotransferase family. NifS/IscS subfamily. In terms of assembly, homodimer. Forms a heterotetramer with IscU, interacts with other sulfur acceptors. Pyridoxal 5'-phosphate serves as cofactor.

It localises to the cytoplasm. The enzyme catalyses (sulfur carrier)-H + L-cysteine = (sulfur carrier)-SH + L-alanine. The protein operates within cofactor biosynthesis; iron-sulfur cluster biosynthesis. Functionally, master enzyme that delivers sulfur to a number of partners involved in Fe-S cluster assembly, tRNA modification or cofactor biosynthesis. Catalyzes the removal of elemental sulfur atoms from cysteine to produce alanine. Functions as a sulfur delivery protein for Fe-S cluster synthesis onto IscU, an Fe-S scaffold assembly protein, as well as other S acceptor proteins. The polypeptide is Cysteine desulfurase IscS (Shewanella baltica (strain OS223)).